The following is a 245-amino-acid chain: 1-(5-phosphoribosyl)-5-[(5-phosphoribosylamino)methylideneamino] imidazole-4-carboxamide isomerase (245 aa).

The active-site Proton acceptor is the D7. D129 functions as the Proton donor in the catalytic mechanism.

It belongs to the HisA/HisF family.

It is found in the cytoplasm. The enzyme catalyses 1-(5-phospho-beta-D-ribosyl)-5-[(5-phospho-beta-D-ribosylamino)methylideneamino]imidazole-4-carboxamide = 5-[(5-phospho-1-deoxy-D-ribulos-1-ylimino)methylamino]-1-(5-phospho-beta-D-ribosyl)imidazole-4-carboxamide. The protein operates within amino-acid biosynthesis; L-histidine biosynthesis; L-histidine from 5-phospho-alpha-D-ribose 1-diphosphate: step 4/9. The chain is 1-(5-phosphoribosyl)-5-[(5-phosphoribosylamino)methylideneamino] imidazole-4-carboxamide isomerase from Klebsiella pneumoniae subsp. pneumoniae (strain ATCC 700721 / MGH 78578).